The primary structure comprises 587 residues: Aspartate--tRNA ligase (587 aa).

Glu-175 contributes to the L-aspartate binding site. The tract at residues 199–202 (QQFK) is aspartate. Arg-221 and His-446 together coordinate L-aspartate. 221 to 223 (RDE) contacts ATP. Glu-480 is an ATP binding site. Arg-487 is an L-aspartate binding site. Residue 532–535 (GVDR) coordinates ATP.

The protein belongs to the class-II aminoacyl-tRNA synthetase family. Type 1 subfamily. Homodimer.

The protein resides in the cytoplasm. It catalyses the reaction tRNA(Asp) + L-aspartate + ATP = L-aspartyl-tRNA(Asp) + AMP + diphosphate. Its function is as follows. Catalyzes the attachment of L-aspartate to tRNA(Asp) in a two-step reaction: L-aspartate is first activated by ATP to form Asp-AMP and then transferred to the acceptor end of tRNA(Asp). The chain is Aspartate--tRNA ligase from Streptomyces coelicolor (strain ATCC BAA-471 / A3(2) / M145).